The primary structure comprises 518 residues: Arrestin-related trafficking adapter 10 (518 aa).

K118 is covalently cross-linked (Glycyl lysine isopeptide (Lys-Gly) (interchain with G-Cter in ubiquitin)).

This sequence belongs to the ART10 family. As to quaternary structure, interacts with RSP5. In terms of processing, ubiquitinated by RSP5.

The protein localises to the cytoplasm. In terms of biological role, may regulate endocytosis by recruiting RSP5 ubiquitin ligase activity to specific plasma membrane proteins in response to extracellular stimuli. The sequence is that of Arrestin-related trafficking adapter 10 (ART10) from Saccharomyces cerevisiae (strain Lalvin EC1118 / Prise de mousse) (Baker's yeast).